The primary structure comprises 351 residues: Protein arginine N-methyltransferase 1-B (351 aa).

The SAM-dependent MTase PRMT-type domain maps to Lys30–Val331. Residues His43, Arg52, Gly76, Glu98, and Glu127 each contribute to the S-adenosyl-L-methionine site. Active-site residues include Glu142 and Glu151.

It belongs to the class I-like SAM-binding methyltransferase superfamily. Protein arginine N-methyltransferase family. Homodimer. Homooctamer; individual homodimers associates to form a homooctamer and homooligomerization is required for proper localization to the cell membrane. Individual homodimers can associate to form a homohexamer. Component of a complex with lsm14a/rap55a. Interacts with cirbp. As to expression, from the onset of gastrulation, expressed in dorsal mesoderm, and in dorsal and ventral ectoderm. At the neurula and tail bud stages, expression is restricted to the neuroectoderm, with highest expression in the anterior neural plate.

It is found in the nucleus. It localises to the nucleoplasm. The protein localises to the cytoplasm. The protein resides in the cytosol. The catalysed reaction is L-arginyl-[protein] + 2 S-adenosyl-L-methionine = N(omega),N(omega)-dimethyl-L-arginyl-[protein] + 2 S-adenosyl-L-homocysteine + 2 H(+). The enzyme catalyses L-arginyl-[protein] + S-adenosyl-L-methionine = N(omega)-methyl-L-arginyl-[protein] + S-adenosyl-L-homocysteine + H(+). It carries out the reaction N(omega)-methyl-L-arginyl-[protein] + S-adenosyl-L-methionine = N(omega),N(omega)-dimethyl-L-arginyl-[protein] + S-adenosyl-L-homocysteine + H(+). Its function is as follows. Arginine methyltransferase that methylates (mono and asymmetric dimethylation) the guanidino nitrogens of arginyl residues present in target proteins. Constitutes the main enzyme that mediates monomethylation and asymmetric dimethylation of histone H4 'Arg-4' (H4R3me1 and H4R3me2a, respectively), a specific tag for epigenetic transcriptional activation. Methylates ilf3 to regulate its DNA-binding activity. Required for neural induction, playing a key role in the control of epidermal versus neural cell fate choice. This Xenopus laevis (African clawed frog) protein is Protein arginine N-methyltransferase 1-B (prmt1-b).